Reading from the N-terminus, the 635-residue chain is Leucine aminopeptidase 2-2 (635 aa).

Residues Gln141 to Gln143 and Pro265 to Glu270 contribute to the substrate site. Zn(2+) is bound at residue His294. The active-site Proton acceptor is Glu295. 2 residues coordinate Zn(2+): His298 and Glu317. Tyr399 (proton donor) is an active-site residue.

This sequence belongs to the peptidase M1 family. It depends on Zn(2+) as a cofactor.

It localises to the cytoplasm. It is found in the nucleus. It catalyses the reaction an epoxide + H2O = an ethanediol. Its function is as follows. Aminopeptidase that preferentially cleaves di- and tripeptides. Also has low epoxide hydrolase activity (in vitro). Can hydrolyze the epoxide leukotriene LTA(4) but it forms preferentially 5,6-dihydroxy-7,9,11,14-eicosatetraenoic acid rather than the cytokine leukotriene B(4) as the product compared to the homologous mammalian enzyme (in vitro). This chain is Leucine aminopeptidase 2-2 (LTA4), found in Scheffersomyces stipitis (strain ATCC 58785 / CBS 6054 / NBRC 10063 / NRRL Y-11545) (Yeast).